Here is a 426-residue protein sequence, read N- to C-terminus: Serine--tRNA ligase (426 aa).

The interval 36–66 (KRKHLQERTQDLQSQRNTISKEIGQKKAKGE) is disordered. Over residues 46–55 (DLQSQRNTIS) the composition is skewed to polar residues. Residue 233 to 235 (TAE) participates in L-serine binding. 264-266 (RSE) lines the ATP pocket. Glu-287 lines the L-serine pocket. 351–354 (EISS) contacts ATP. An L-serine-binding site is contributed by Ser-387.

This sequence belongs to the class-II aminoacyl-tRNA synthetase family. Type-1 seryl-tRNA synthetase subfamily. Homodimer. The tRNA molecule binds across the dimer.

Its subcellular location is the cytoplasm. The catalysed reaction is tRNA(Ser) + L-serine + ATP = L-seryl-tRNA(Ser) + AMP + diphosphate + H(+). The enzyme catalyses tRNA(Sec) + L-serine + ATP = L-seryl-tRNA(Sec) + AMP + diphosphate + H(+). It participates in aminoacyl-tRNA biosynthesis; selenocysteinyl-tRNA(Sec) biosynthesis; L-seryl-tRNA(Sec) from L-serine and tRNA(Sec): step 1/1. In terms of biological role, catalyzes the attachment of serine to tRNA(Ser). Is also able to aminoacylate tRNA(Sec) with serine, to form the misacylated tRNA L-seryl-tRNA(Sec), which will be further converted into selenocysteinyl-tRNA(Sec). In Francisella tularensis subsp. holarctica (strain FTNF002-00 / FTA), this protein is Serine--tRNA ligase.